Reading from the N-terminus, the 650-residue chain is Epithelial sodium channel subunit gamma (650 aa).

At 1 to 55 (MAPGEKIKAKIKKNLPVRGPQAPTIKDLMHWYCMNTNTHGCRRIVVSRGRLRRLL) the chain is on the cytoplasmic side. A helical transmembrane segment spans residues 56–76 (WIAFTLTAVALIIWQCALLVF). The Extracellular segment spans residues 77 to 542 (SFYTVSVSIK…GGQLGLWMSC (466 aa)). Cystine bridges form between C100–C284, C208–C215, C261–C268, C373–C458, C395–C454, C399–C450, C408–C435, and C410–C424. The segment at 135-222 (RKRREAGSMP…SDCATYTFSS (88 aa)) is gating release of inhibition by proteolysis (GRIP); protease-sensitive region that is responsible for the proteolytic activation of the channel. N210 carries an N-linked (GlcNAc...) asparagine glycan. N272 is a glycosylation site (N-linked (GlcNAc...) asparagine). A glycan (N-linked (GlcNAc...) asparagine) is linked at N498. Residues 543 to 563 (SVVCVIEIIEVFFIDFFSIIA) traverse the membrane as a helical segment. The Cytoplasmic portion of the chain corresponds to 564 to 650 (RRQWHKAKDW…LTDTQLTNEL (87 aa)). Residues 577-628 (RQTPPSTETPSSRQGQDNPALDTDDDLPTFTSAMRLPPAPGSTVPGTPPPRY) form a disordered region. Positions 579-593 (TPPSTETPSSRQGQD) are enriched in polar residues. Positions 624-628 (PPPRY) match the PY motif; mediates interaction, ubiquitination and inhibition by NEDD4 and NEDD4L motif. Positions 624–628 (PPPRY) match the PY motif; recruits WW domain-containing proteins and is thereby required for ubiquitination and inhibition of the channel by NEDD4 and NEDD4L motif.

It belongs to the amiloride-sensitive sodium channel (TC 1.A.6) family. SCNN1G subfamily. Component of the heterotrimeric epithelial sodium channel (ENaC) composed of an alpha/SCNN1A, a beta/SCNN1B and a gamma/SCNN1G subunit. Interacts with WWP1 (via WW domains). Interacts with WWP2 (via WW domains); inhibits the channel. Interacts with the full-length immature form of PCSK9 (pro-PCSK9); inhibits ENaC by promoting its proteasomal degradation. Interacts with BPIFA1; the interaction is indirect via SCNN1B and inhibits the proteolytic maturation of SCNN1A and SCNN1G and the activation of ENaC. In terms of processing, phosphorylated on serine and threonine residues. Aldosterone and insulin increase the basal level of phosphorylation. Post-translationally, ubiquitinated. Can be ubiquitinated at multiple sites and undergo monoubiquitination and polyubiquitination. Ubiquitination by NEDD4 or NEDD4L inhibits the ENaC channel through endocytosis, intracellular retention and degradation of its individual subunits. ENaC is activated through the proteolytic maturation of its subunits. Furin cleaves the SCNN1G subunit first, followed by cleavage by prostasin (PRSS8), which results in a stepwise increase in the open probability of the channel due to the release of an inhibitory tract. BPIFA1, which is recruited by the SCNN1B subunit, prevents the proteolytic activation of ENaC. In terms of processing, N-glycosylated. N-linked glycans are processed to complex type during ENaC complex assembly and transport to the plasma membrane.

It is found in the apical cell membrane. The enzyme catalyses Na(+)(in) = Na(+)(out). Originally identified and characterized by its inhibition by the diuretic drug amiloride. This is one of the three pore-forming subunits of the heterotrimeric epithelial sodium channel (ENaC), a critical regulator of sodium balance and fluid homeostasis. ENaC operates in epithelial tissues, where it mediates the electrodiffusion of sodium ions from extracellular fluid through the apical membrane of cells, with water following osmotically. It plays a key role in maintaining sodium homeostasis through electrogenic sodium reabsorption in the kidneys. Additionally, ENaC is essential for airway surface liquid homeostasis, which is crucial for proper mucus clearance. This is Epithelial sodium channel subunit gamma from Rattus norvegicus (Rat).